The chain runs to 562 residues: Ribonuclease Y (562 aa).

The chain crosses the membrane as a helical span at residues 1-21; it reads MNMLYFVLALLVGLAGGFFVG. A disordered region spans residues 108-129; the sequence is AAQDAARERETLSADRQETRRE. One can recognise a KH domain in the interval 252–312; it reads SVSVVPIPND…VRREVARHVL (61 aa). An HD domain is found at 378-471; sequence VLKHSVQVAH…VAAADAISAA (94 aa).

It belongs to the RNase Y family.

The protein resides in the cell membrane. Its function is as follows. Endoribonuclease that initiates mRNA decay. The protein is Ribonuclease Y of Deinococcus geothermalis (strain DSM 11300 / CIP 105573 / AG-3a).